The primary structure comprises 144 residues: Ribosomal RNA large subunit methyltransferase H (144 aa).

S-adenosyl-L-methionine is bound by residues Leu-63, Gly-92, and 111-116; that span reads LSAMTL.

Belongs to the RNA methyltransferase RlmH family. Homodimer.

The protein localises to the cytoplasm. It carries out the reaction pseudouridine(1915) in 23S rRNA + S-adenosyl-L-methionine = N(3)-methylpseudouridine(1915) in 23S rRNA + S-adenosyl-L-homocysteine + H(+). Its function is as follows. Specifically methylates the pseudouridine at position 1915 (m3Psi1915) in 23S rRNA. The chain is Ribosomal RNA large subunit methyltransferase H from Prochlorococcus marinus (strain MIT 9313).